The primary structure comprises 264 residues: Thymidylate synthase (264 aa).

R21 serves as a coordination point for dUMP. H51 contacts (6R)-5,10-methylene-5,6,7,8-tetrahydrofolate. 126-127 serves as a coordination point for dUMP; sequence RR. The active-site Nucleophile is C146. DUMP-binding positions include 166–169, N177, and 207–209; these read RSCD and HLY. A (6R)-5,10-methylene-5,6,7,8-tetrahydrofolate-binding site is contributed by D169. S263 contributes to the (6R)-5,10-methylene-5,6,7,8-tetrahydrofolate binding site.

Belongs to the thymidylate synthase family. Bacterial-type ThyA subfamily. As to quaternary structure, homodimer.

It localises to the cytoplasm. The catalysed reaction is dUMP + (6R)-5,10-methylene-5,6,7,8-tetrahydrofolate = 7,8-dihydrofolate + dTMP. The protein operates within pyrimidine metabolism; dTTP biosynthesis. Functionally, catalyzes the reductive methylation of 2'-deoxyuridine-5'-monophosphate (dUMP) to 2'-deoxythymidine-5'-monophosphate (dTMP) while utilizing 5,10-methylenetetrahydrofolate (mTHF) as the methyl donor and reductant in the reaction, yielding dihydrofolate (DHF) as a by-product. This enzymatic reaction provides an intracellular de novo source of dTMP, an essential precursor for DNA biosynthesis. The chain is Thymidylate synthase from Buchnera aphidicola subsp. Acyrthosiphon pisum (strain 5A).